The sequence spans 294 residues: Probable HTH-type transcriptional regulator LrrA (294 aa).

An HTH lysR-type domain is found at 1–58 (MNITQLQILAAVVETGNFSAAALQLDLSQSAVSRAIAALEDELGVVLLSRGRFGARPT). Residues 18–37 (FSAAALQLDLSQSAVSRAIA) constitute a DNA-binding region (H-T-H motif).

The protein belongs to the LysR transcriptional regulatory family.

The protein is Probable HTH-type transcriptional regulator LrrA (lrrA) of Synechococcus elongatus (strain ATCC 33912 / PCC 7942 / FACHB-805) (Anacystis nidulans R2).